A 208-amino-acid chain; its full sequence is Protein GrpE (208 aa).

Residues 1-27 (MERMNQSRKVPIHDAAEESSAEAHETQ) show a composition bias toward basic and acidic residues. The segment at 1 to 65 (MERMNQSRKV…AEEAQEEEAA (65 aa)) is disordered. The segment covering 45-64 (MAEEAVEQAQDAEEAQEEEA) has biased composition (acidic residues).

It belongs to the GrpE family. Homodimer.

It is found in the cytoplasm. Its function is as follows. Participates actively in the response to hyperosmotic and heat shock by preventing the aggregation of stress-denatured proteins, in association with DnaK and GrpE. It is the nucleotide exchange factor for DnaK and may function as a thermosensor. Unfolded proteins bind initially to DnaJ; upon interaction with the DnaJ-bound protein, DnaK hydrolyzes its bound ATP, resulting in the formation of a stable complex. GrpE releases ADP from DnaK; ATP binding to DnaK triggers the release of the substrate protein, thus completing the reaction cycle. Several rounds of ATP-dependent interactions between DnaJ, DnaK and GrpE are required for fully efficient folding. The sequence is that of Protein GrpE from Desulfatibacillum aliphaticivorans.